The following is a 406-amino-acid chain: Phosphatidylinositol 5-phosphate 4-kinase type-2 alpha (406 aa).

An N-acetylalanine modification is found at Ala-2. Phosphothreonine is present on Thr-3. Position 14 is a phosphoserine (Ser-14). Residues 33–405 enclose the PIPK domain; the sequence is ASDPLLSVLM…RFLDFIGHIL (373 aa). The segment at 59–65 is required for interaction with PIP5K1A; the sequence is VMLMPDD. An N6-acetyllysine mark is found at Lys-89 and Lys-145. The tract at residues 288-329 is disordered; sequence QEEVECEENDGEEEGESDGTHPVGTPPDSPGNTLNSSPPLAP. Residues 289 to 304 are compositionally biased toward acidic residues; the sequence is EEVECEENDGEEEGES.

As to quaternary structure, homodimer. Interacts with PIP4K2B; the interaction may regulate localization to the nucleus. Probably interacts with PIP5K1A; the interaction inhibits PIP5K1A kinase activity. Phosphorylated in tyrosines. Phosphorylation is induced by light and increases kinase activity. Expressed ubiquitously, with high levels in the brain. Present in most tissues, except notably skeletal muscle and small intestine.

Its subcellular location is the cell membrane. It localises to the nucleus. It is found in the lysosome. The protein localises to the cytoplasm. The protein resides in the photoreceptor inner segment. Its subcellular location is the cell projection. It localises to the cilium. It is found in the photoreceptor outer segment. The enzyme catalyses a 1,2-diacyl-sn-glycero-3-phospho-(1D-myo-inositol-5-phosphate) + ATP = a 1,2-diacyl-sn-glycero-3-phospho-(1D-myo-inositol-4,5-bisphosphate) + ADP + H(+). The catalysed reaction is 1,2-dihexadecanoyl-sn-glycero-3-phospho-(1D-myo-inositol-5-phosphate) + ATP = 1,2-dihexadecanoyl-sn-glycero-3-phospho-(1D-myo-inositol-4,5-bisphosphate) + ADP + H(+). It carries out the reaction 1,2-dihexadecanoyl-sn-glycero-3-phospho-(1D-myo-inositol-5-phosphate) + GTP = 1,2-dihexadecanoyl-sn-glycero-3-phospho-(1D-myo-inositol-4,5-bisphosphate) + GDP + H(+). In rod outer segments, activated by light. Inhibited by I-OMe tyrphostin AG-538 (I-OMe-AG-538), acting as an ATP-competitive inhibitor. Catalyzes the phosphorylation of phosphatidylinositol 5-phosphate (PtdIns5P) on the fourth hydroxyl of the myo-inositol ring, to form phosphatidylinositol 4,5-bisphosphate (PtdIns(4,5)P2). Has both ATP- and GTP-dependent kinase activities. May exert its function by regulating the levels of PtdIns5P, which functions in the cytosol by increasing AKT activity and in the nucleus signals through ING2. May regulate the pool of cytosolic PtdIns5P in response to the activation of tyrosine phosphorylation. Required for lysosome-peroxisome membrane contacts and intracellular cholesterol transport through modulating peroxisomal PtdIns(4,5)P2 level. In collaboration with PIP4K2B, has a role in mediating autophagy in times of nutrient stress. Required for autophagosome-lysosome fusion and the regulation of cellular lipid metabolism. May be involved in thrombopoiesis, and the terminal maturation of megakaryocytes and regulation of their size. Negatively regulates insulin signaling through a catalytic-independent mechanism. PIP4Ks interact with PIP5Ks and suppress PIP5K-mediated PtdIns(4,5)P2 synthesis and insulin-dependent conversion to PtdIns(3,4,5)P3. The protein is Phosphatidylinositol 5-phosphate 4-kinase type-2 alpha of Homo sapiens (Human).